We begin with the raw amino-acid sequence, 218 residues long: UPF0301 protein RPB_4502 (218 aa).

The interval 1-26 (MVTKSKRPKSGDRSGREPGNAGPIEQ) is disordered.

It belongs to the UPF0301 (AlgH) family.

This Rhodopseudomonas palustris (strain HaA2) protein is UPF0301 protein RPB_4502.